A 168-amino-acid chain; its full sequence is NADH-quinone oxidoreductase subunit I (168 aa).

4Fe-4S ferredoxin-type domains are found at residues 58-88 and 99-128; these read LRRYPNGEERCIACKLCEAVCPAQAITIEAG and VRYDIDMVKCIYCGLCQEACPVDAIVEGPN. Residues C68, C71, C74, C78, C108, C111, C114, and C118 each coordinate [4Fe-4S] cluster.

The protein belongs to the complex I 23 kDa subunit family. NDH-1 is composed of 14 different subunits. Subunits NuoA, H, J, K, L, M, N constitute the membrane sector of the complex. Requires [4Fe-4S] cluster as cofactor.

The protein resides in the cell inner membrane. It catalyses the reaction a quinone + NADH + 5 H(+)(in) = a quinol + NAD(+) + 4 H(+)(out). Functionally, NDH-1 shuttles electrons from NADH, via FMN and iron-sulfur (Fe-S) centers, to quinones in the respiratory chain. The immediate electron acceptor for the enzyme in this species is believed to be ubiquinone. Couples the redox reaction to proton translocation (for every two electrons transferred, four hydrogen ions are translocated across the cytoplasmic membrane), and thus conserves the redox energy in a proton gradient. This chain is NADH-quinone oxidoreductase subunit I, found in Bradyrhizobium diazoefficiens (strain JCM 10833 / BCRC 13528 / IAM 13628 / NBRC 14792 / USDA 110).